Consider the following 417-residue polypeptide: Imidazolonepropionase (417 aa).

The Fe(3+) site is built by His-77 and His-79. Zn(2+) is bound by residues His-77 and His-79. Positions 86, 149, and 182 each coordinate 4-imidazolone-5-propanoate. Residue Tyr-149 coordinates N-formimidoyl-L-glutamate. His-247 lines the Fe(3+) pocket. Residue His-247 participates in Zn(2+) binding. Gln-250 is a binding site for 4-imidazolone-5-propanoate. Asp-322 is a binding site for Fe(3+). Asp-322 is a binding site for Zn(2+). N-formimidoyl-L-glutamate-binding residues include Asn-324 and Gly-326. Thr-327 serves as a coordination point for 4-imidazolone-5-propanoate.

This sequence belongs to the metallo-dependent hydrolases superfamily. HutI family. Requires Zn(2+) as cofactor. Fe(3+) is required as a cofactor.

It localises to the cytoplasm. The enzyme catalyses 4-imidazolone-5-propanoate + H2O = N-formimidoyl-L-glutamate. Its pathway is amino-acid degradation; L-histidine degradation into L-glutamate; N-formimidoyl-L-glutamate from L-histidine: step 3/3. Catalyzes the hydrolytic cleavage of the carbon-nitrogen bond in imidazolone-5-propanoate to yield N-formimidoyl-L-glutamate. It is the third step in the universal histidine degradation pathway. This Cupriavidus taiwanensis (strain DSM 17343 / BCRC 17206 / CCUG 44338 / CIP 107171 / LMG 19424 / R1) (Ralstonia taiwanensis (strain LMG 19424)) protein is Imidazolonepropionase.